Consider the following 67-residue polypeptide: MFGNLGQAKKYLGQAAKMLIGIPDYDNYVEHMKTNHPDKPYMSYEEFFRERQNARYGGDGKGGMRCC.

It to E.coli YbdD.

This is an uncharacterized protein from Escherichia coli O157:H7.